A 637-amino-acid polypeptide reads, in one-letter code: Serine/threonine-protein kinase Nek11 (637 aa).

A Protein kinase domain is found at 29-287 (YVLQQKLGSG…AIEILKIPYI (259 aa)). ATP is bound by residues 35–43 (LGSGSFGTV) and K61. D158 acts as the Proton acceptor in catalysis. The residue at position 273 (S273) is a Phosphoserine; by CHEK1. Residues 302–385 (TLEDKNLDCQ…QELRSRNFQQ (84 aa)) adopt a coiled-coil conformation. The disordered stretch occupies residues 399-446 (GMEEKEEQPEGRPSCSPQDEDEERWQDREEEFDEPTLENLSEPQPIPS). Acidic residues predominate over residues 416–434 (QDEDEERWQDREEEFDEPT).

The protein belongs to the protein kinase superfamily. NEK Ser/Thr protein kinase family. NIMA subfamily. In terms of assembly, interacts with NEK2. The cofactor is Mn(2+). It depends on Mg(2+) as a cofactor. Phosphorylated by NEK2. Phosphorylation at Ser-273 is important for its activation.

It localises to the nucleus. The protein localises to the nucleolus. It carries out the reaction L-seryl-[protein] + ATP = O-phospho-L-seryl-[protein] + ADP + H(+). The catalysed reaction is L-threonyl-[protein] + ATP = O-phospho-L-threonyl-[protein] + ADP + H(+). Its activity is regulated as follows. Autorepressed by intramolecular binding of the C-terminus which dissociates following phosphorylation by NEK2. Activated in response to DNA damage. Inhibited by zinc. Its function is as follows. Protein kinase which plays an important role in the G2/M checkpoint response to DNA damage. Controls degradation of CDC25A by directly phosphorylating it on residues whose phosphorylation is required for BTRC-mediated polyubiquitination and degradation. The sequence is that of Serine/threonine-protein kinase Nek11 (NEK11) from Macaca fascicularis (Crab-eating macaque).